We begin with the raw amino-acid sequence, 223 residues long: Deoxyribose-phosphate aldolase (223 aa).

Residue Asp89 is the Proton donor/acceptor of the active site. Lys152 acts as the Schiff-base intermediate with acetaldehyde in catalysis. The Proton donor/acceptor role is filled by Lys181.

This sequence belongs to the DeoC/FbaB aldolase family. DeoC type 1 subfamily.

It is found in the cytoplasm. It carries out the reaction 2-deoxy-D-ribose 5-phosphate = D-glyceraldehyde 3-phosphate + acetaldehyde. The protein operates within carbohydrate degradation; 2-deoxy-D-ribose 1-phosphate degradation; D-glyceraldehyde 3-phosphate and acetaldehyde from 2-deoxy-alpha-D-ribose 1-phosphate: step 2/2. Its function is as follows. Catalyzes a reversible aldol reaction between acetaldehyde and D-glyceraldehyde 3-phosphate to generate 2-deoxy-D-ribose 5-phosphate. The polypeptide is Deoxyribose-phosphate aldolase (Bacillus cereus (strain ATCC 10987 / NRS 248)).